The following is a 185-amino-acid chain: Prenylated Rab acceptor protein 1 (185 aa).

Over 1–78 (MAAEKDQQKD…RNVEYYQSNY (78 aa)) the chain is Cytoplasmic. A required for interaction with prenylated RAB3A and VAMP2 region spans residues 30–54 (AGRERLERRRATIRPWSSFVDQRRF). 2 helical membrane-spanning segments follow: residues 79–94 (VFVF…VTSP) and 95–112 (MLLV…ILYL). Topologically, residues 113–131 (RTLQSKFVLFGREVSPAHQ) are cytoplasmic. 2 helical membrane-spanning segments follow: residues 132 to 148 (YALA…LAGA) and 149 to 165 (GSAV…VIGS). The required for interaction with GDI1 stretch occupies residues 165–185 (SHAAFHQMEAVDGEELQMEPV). At 166–185 (HAAFHQMEAVDGEELQMEPV) the chain is on the cytoplasmic side. Residues 175–185 (VDGEELQMEPV) form a required for interaction with prenylated RAB3A and VAMP2 region. The interval 175-185 (VDGEELQMEPV) is homodimerization.

This sequence belongs to the PRA1 family. Homodimer. Interacts with VAMP2 (synaptobrevin-2), prenylated Rab proteins, GDI1, NDRG1 and PCLO.

It localises to the cell membrane. It is found in the cytoplasm. The protein resides in the golgi apparatus. Its subcellular location is the cytoplasmic vesicle. The protein localises to the secretory vesicle. It localises to the synaptic vesicle. Its function is as follows. General Rab protein regulator required for vesicle formation from the Golgi complex. May control vesicle docking and fusion by mediating the action of Rab GTPases to the SNARE complexes. In addition it inhibits the removal of Rab GTPases from the membrane by GDI1. The sequence is that of Prenylated Rab acceptor protein 1 (RABAC1) from Canis lupus familiaris (Dog).